A 266-amino-acid polypeptide reads, in one-letter code: Pyrrolizixenacetamide deacetylase (266 aa).

Residue threonine 28 coordinates acetate. Residue serine 94 is the Nucleophile of the active site. Acetate is bound at residue leucine 95. Catalysis depends on charge relay system residues aspartate 215 and histidine 242. Histidine 242 lines the acetate pocket.

The protein belongs to the AB hydrolase superfamily. Homodimer.

It catalyses the reaction pyrrolizixenacetamide + H2O = 3-amino-5,6,7,7a-tetrahydro-1H-pyrrolizin-1-one + acetate + H(+). Involved in the biosynthetic pathway of pyrrolizwilline, a pyrrolizidine alkaloid. Catalyzes the N-deacetylation of pyrrolizixenacetamide. This chain is Pyrrolizixenacetamide deacetylase, found in Xenorhabdus hominickii.